We begin with the raw amino-acid sequence, 292 residues long: Glyoxylase B2 (292 aa).

H72, H74, D76, H77, H148, and D166 together coordinate Zn(2+). Substrate-binding positions include 175-181 (TARCDFP), 208-210 (HDY), and 284-287 (KIPL). A Zn(2+)-binding site is contributed by H208.

Belongs to the metallo-beta-lactamase superfamily. Glyoxalase II family. Zn(2+) is required as a cofactor.

The polypeptide is Glyoxylase B2 (gloB2) (Dictyostelium discoideum (Social amoeba)).